A 340-amino-acid chain; its full sequence is Porphobilinogen deaminase (340 aa).

An S-(dipyrrolylmethanemethyl)cysteine modification is found at Cys-258.

This sequence belongs to the HMBS family. The cofactor is dipyrromethane.

The catalysed reaction is 4 porphobilinogen + H2O = hydroxymethylbilane + 4 NH4(+). It functions in the pathway porphyrin-containing compound metabolism; protoporphyrin-IX biosynthesis; coproporphyrinogen-III from 5-aminolevulinate: step 2/4. In terms of biological role, tetrapolymerization of the monopyrrole PBG into the hydroxymethylbilane pre-uroporphyrinogen in several discrete steps. This is Porphobilinogen deaminase (HEM3) from Candida albicans (strain SC5314 / ATCC MYA-2876) (Yeast).